The following is a 311-amino-acid chain: GTP cyclohydrolase FolE2 (311 aa).

This sequence belongs to the GTP cyclohydrolase IV family.

It catalyses the reaction GTP + H2O = 7,8-dihydroneopterin 3'-triphosphate + formate + H(+). It functions in the pathway cofactor biosynthesis; 7,8-dihydroneopterin triphosphate biosynthesis; 7,8-dihydroneopterin triphosphate from GTP: step 1/1. Its function is as follows. Converts GTP to 7,8-dihydroneopterin triphosphate. This Hydrogenovibrio crunogenus (strain DSM 25203 / XCL-2) (Thiomicrospira crunogena) protein is GTP cyclohydrolase FolE2.